We begin with the raw amino-acid sequence, 130 residues long: Small ribosomal subunit protein uS12c (130 aa).

Belongs to the universal ribosomal protein uS12 family. As to quaternary structure, part of the 30S ribosomal subunit.

The protein resides in the plastid. It localises to the chloroplast. With S4 and S5 plays an important role in translational accuracy. Located at the interface of the 30S and 50S subunits. This chain is Small ribosomal subunit protein uS12c (rps12), found in Tetradesmus obliquus (Green alga).